The primary structure comprises 120 residues: Small ribosomal subunit protein bS6 (120 aa).

The segment covering 97-112 (SNEPSPILKNQSTENT) has biased composition (polar residues). The tract at residues 97 to 120 (SNEPSPILKNQSTENTPVIDVTAN) is disordered.

It belongs to the bacterial ribosomal protein bS6 family.

Its function is as follows. Binds together with bS18 to 16S ribosomal RNA. This chain is Small ribosomal subunit protein bS6, found in Rickettsia bellii (strain RML369-C).